The primary structure comprises 69 residues: DNA gyrase inhibitor YacG (69 aa).

The Zn(2+) site is built by cysteine 12, cysteine 15, cysteine 31, and cysteine 35. Residues 49-69 (RVPVEPKPDEGETPDQAERPQ) form a disordered region.

This sequence belongs to the DNA gyrase inhibitor YacG family. Interacts with GyrB. Zn(2+) serves as cofactor.

Functionally, inhibits all the catalytic activities of DNA gyrase by preventing its interaction with DNA. Acts by binding directly to the C-terminal domain of GyrB, which probably disrupts DNA binding by the gyrase. The protein is DNA gyrase inhibitor YacG of Thiobacillus denitrificans (strain ATCC 25259 / T1).